An 886-amino-acid polypeptide reads, in one-letter code: Alanine--tRNA ligase (886 aa).

Residues H570, H574, C672, and H676 each contribute to the Zn(2+) site.

The protein belongs to the class-II aminoacyl-tRNA synthetase family. It depends on Zn(2+) as a cofactor.

It is found in the cytoplasm. The enzyme catalyses tRNA(Ala) + L-alanine + ATP = L-alanyl-tRNA(Ala) + AMP + diphosphate. Functionally, catalyzes the attachment of alanine to tRNA(Ala) in a two-step reaction: alanine is first activated by ATP to form Ala-AMP and then transferred to the acceptor end of tRNA(Ala). Also edits incorrectly charged Ser-tRNA(Ala) and Gly-tRNA(Ala) via its editing domain. In Acidothermus cellulolyticus (strain ATCC 43068 / DSM 8971 / 11B), this protein is Alanine--tRNA ligase.